The following is a 297-amino-acid chain: Phosphoribosylaminoimidazole-succinocarboxamide synthase (297 aa).

This sequence belongs to the SAICAR synthetase family.

It carries out the reaction 5-amino-1-(5-phospho-D-ribosyl)imidazole-4-carboxylate + L-aspartate + ATP = (2S)-2-[5-amino-1-(5-phospho-beta-D-ribosyl)imidazole-4-carboxamido]succinate + ADP + phosphate + 2 H(+). Its pathway is purine metabolism; IMP biosynthesis via de novo pathway; 5-amino-1-(5-phospho-D-ribosyl)imidazole-4-carboxamide from 5-amino-1-(5-phospho-D-ribosyl)imidazole-4-carboxylate: step 1/2. This is Phosphoribosylaminoimidazole-succinocarboxamide synthase from Corynebacterium glutamicum (strain ATCC 13032 / DSM 20300 / JCM 1318 / BCRC 11384 / CCUG 27702 / LMG 3730 / NBRC 12168 / NCIMB 10025 / NRRL B-2784 / 534).